Consider the following 147-residue polypeptide: Ribosome maturation factor RimP (147 aa).

The protein belongs to the RimP family.

It is found in the cytoplasm. Its function is as follows. Required for maturation of 30S ribosomal subunits. This is Ribosome maturation factor RimP from Thermosipho melanesiensis (strain DSM 12029 / CIP 104789 / BI429).